Here is a 207-residue protein sequence, read N- to C-terminus: Nudix hydrolase 4 (207 aa).

Residues Gly-58–Ile-194 form the Nudix hydrolase domain. A Nudix box motif is present at residues Gly-101–Gly-122. 2 residues coordinate Mg(2+): Glu-116 and Glu-120.

It belongs to the Nudix hydrolase family. The cofactor is Mg(2+). Requires Mn(2+) as cofactor. In terms of tissue distribution, expressed in roots, stems and leaves.

It carries out the reaction ADP-D-ribose + H2O = D-ribose 5-phosphate + AMP + 2 H(+). The catalysed reaction is NAD(+) + H2O = beta-nicotinamide D-ribonucleotide + AMP + 2 H(+). The enzyme catalyses NADH + H2O = reduced beta-nicotinamide D-ribonucleotide + AMP + 2 H(+). Functionally, probably mediates the hydrolysis of some nucleoside diphosphate derivatives. In vitro, it can use both NADH and ADP-ribose as substrates; however the relevance of such substrates in vivo is unclear. The chain is Nudix hydrolase 4 (NUDT4) from Arabidopsis thaliana (Mouse-ear cress).